Consider the following 196-residue polypeptide: Rac-like GTP-binding protein RAC13 (196 aa).

Residue 13–20 (GDGAVGKT) coordinates GTP. The short motif at 35–43 (YVPTVFDNF) is the Effector region element. Residues 60–64 (DTAGQ) and 118–121 (TKLD) each bind GTP. Cys-193 is subject to Cysteine methyl ester. A lipid anchor (S-geranylgeranyl cysteine) is attached at Cys-193. The propeptide at 194-196 (AFL) is removed in mature form.

It belongs to the small GTPase superfamily. Rho family.

The protein localises to the cytoplasm. It is found in the membrane. In terms of biological role, could participate in a signal transduction pathway that controls cytoskeletal organization. Functionally, inactive GDP-bound Rho GTPases reside in the cytosol, are found in a complex with Rho GDP-dissociation inhibitors (Rho GDIs), and are released from the GDI protein in order to translocate to membranes upon activation. This chain is Rac-like GTP-binding protein RAC13 (RAC13), found in Gossypium hirsutum (Upland cotton).